Here is a 181-residue protein sequence, read N- to C-terminus: Oligoribonuclease (181 aa).

The Exonuclease domain occupies 8 to 171 (LIWLDLEMTG…DDIKDSIMEL (164 aa)). Residue tyrosine 129 is part of the active site.

The protein belongs to the oligoribonuclease family.

Its subcellular location is the cytoplasm. Functionally, 3'-to-5' exoribonuclease specific for small oligoribonucleotides. The polypeptide is Oligoribonuclease (Pseudoalteromonas translucida (strain TAC 125)).